Reading from the N-terminus, the 263-residue chain is 5'-nucleotidase SurE (263 aa).

4 residues coordinate a divalent metal cation: Asp-8, Asp-9, Ser-40, and Asn-93.

It belongs to the SurE nucleotidase family. Requires a divalent metal cation as cofactor.

The protein localises to the cytoplasm. It catalyses the reaction a ribonucleoside 5'-phosphate + H2O = a ribonucleoside + phosphate. In terms of biological role, nucleotidase that shows phosphatase activity on nucleoside 5'-monophosphates. The sequence is that of 5'-nucleotidase SurE from Caulobacter vibrioides (strain ATCC 19089 / CIP 103742 / CB 15) (Caulobacter crescentus).